A 179-amino-acid polypeptide reads, in one-letter code: Large ribosomal subunit protein uL6 (179 aa).

Belongs to the universal ribosomal protein uL6 family. In terms of assembly, part of the 50S ribosomal subunit.

This protein binds to the 23S rRNA, and is important in its secondary structure. It is located near the subunit interface in the base of the L7/L12 stalk, and near the tRNA binding site of the peptidyltransferase center. The protein is Large ribosomal subunit protein uL6 of Synechocystis sp. (strain ATCC 27184 / PCC 6803 / Kazusa).